A 159-amino-acid polypeptide reads, in one-letter code: Ribosomal RNA large subunit methyltransferase H (159 aa).

S-adenosyl-L-methionine contacts are provided by residues G108 and 127–132 (FGPMTF).

The protein belongs to the RNA methyltransferase RlmH family. As to quaternary structure, homodimer.

It is found in the cytoplasm. It carries out the reaction pseudouridine(1915) in 23S rRNA + S-adenosyl-L-methionine = N(3)-methylpseudouridine(1915) in 23S rRNA + S-adenosyl-L-homocysteine + H(+). Its function is as follows. Specifically methylates the pseudouridine at position 1915 (m3Psi1915) in 23S rRNA. The protein is Ribosomal RNA large subunit methyltransferase H of Magnetococcus marinus (strain ATCC BAA-1437 / JCM 17883 / MC-1).